Here is an 869-residue protein sequence, read N- to C-terminus: Valine--tRNA ligase (869 aa).

Residues 47-57 (PYPTGNFHIGN) carry the 'HIGH' region motif. Positions 521 to 525 (KMSKS) match the 'KMSKS' region motif. Lys-524 provides a ligand contact to ATP.

It belongs to the class-I aminoacyl-tRNA synthetase family. ValS type 2 subfamily.

Its subcellular location is the cytoplasm. It catalyses the reaction tRNA(Val) + L-valine + ATP = L-valyl-tRNA(Val) + AMP + diphosphate. Its function is as follows. Catalyzes the attachment of valine to tRNA(Val). As ValRS can inadvertently accommodate and process structurally similar amino acids such as threonine, to avoid such errors, it has a 'posttransfer' editing activity that hydrolyzes mischarged Thr-tRNA(Val) in a tRNA-dependent manner. The polypeptide is Valine--tRNA ligase (Methanosarcina barkeri (strain Fusaro / DSM 804)).